The primary structure comprises 632 residues: tRNA uridine 5-carboxymethylaminomethyl modification enzyme MnmG (632 aa).

FAD-binding positions include 15-20, Ile-127, and Ser-182; that span reads GAGHAG. 276 to 290 lines the NAD(+) pocket; it reads GPRYCPSIEDKIVRF. Gln-373 contributes to the FAD binding site.

This sequence belongs to the MnmG family. In terms of assembly, homodimer. Heterotetramer of two MnmE and two MnmG subunits. The cofactor is FAD.

It localises to the cytoplasm. In terms of biological role, NAD-binding protein involved in the addition of a carboxymethylaminomethyl (cmnm) group at the wobble position (U34) of certain tRNAs, forming tRNA-cmnm(5)s(2)U34. This chain is tRNA uridine 5-carboxymethylaminomethyl modification enzyme MnmG, found in Streptococcus pyogenes serotype M2 (strain MGAS10270).